Reading from the N-terminus, the 979-residue chain is Translation initiation factor IF-2 (979 aa).

The tract at residues 33 to 391 (VKSHSSTITT…TPPAEITLTE (359 aa)) is disordered. Composition is skewed to low complexity over residues 54–63 (QKRPQAPKAQ) and 139–150 (AKTTSPKAEPAA). A compositionally biased stretch (pro residues) spans 151-166 (PAAPKPKLMGPPPRPT). Positions 234–252 (PELDEEPDTNNVEGDDDAT) are enriched in acidic residues. Composition is skewed to basic residues over residues 263 to 278 (PAAK…PSKR) and 294 to 303 (TKTSKLKRRP). Over residues 314–328 (GTTTNNNAEVPSVSL) the composition is skewed to polar residues. Positions 371 to 380 (KEQRRDRPDV) are enriched in basic and acidic residues. The region spanning 468–641 (HRPPVVTIMG…LLVSEIEELS (174 aa)) is the tr-type G domain. The tract at residues 477-484 (GHVDHGKT) is G1. 477-484 (GHVDHGKT) is a GTP binding site. The interval 502–506 (GITQH) is G2. The segment at 527-530 (DTPG) is G3. GTP-binding positions include 527–531 (DTPGH) and 581–584 (NKMD). The segment at 581 to 584 (NKMD) is G4. Residues 617–619 (SAL) form a G5 region.

It belongs to the TRAFAC class translation factor GTPase superfamily. Classic translation factor GTPase family. IF-2 subfamily.

The protein resides in the cytoplasm. One of the essential components for the initiation of protein synthesis. Protects formylmethionyl-tRNA from spontaneous hydrolysis and promotes its binding to the 30S ribosomal subunits. Also involved in the hydrolysis of GTP during the formation of the 70S ribosomal complex. In Picosynechococcus sp. (strain ATCC 27264 / PCC 7002 / PR-6) (Agmenellum quadruplicatum), this protein is Translation initiation factor IF-2.